The sequence spans 665 residues: Methionine--tRNA ligase (665 aa).

A 'HIGH' region motif is present at residues 12 to 22; sequence YYPSGKLHIGS. Positions 308 to 312 match the 'KMSKS' region motif; that stretch reads KMSKS. ATP is bound at residue Lys311. The tRNA-binding domain occupies 562–665; sequence TFDAVEIRVA…SSVPNGSIIG (104 aa).

It belongs to the class-I aminoacyl-tRNA synthetase family. MetG type 2B subfamily. Homodimer.

The protein resides in the cytoplasm. It carries out the reaction tRNA(Met) + L-methionine + ATP = L-methionyl-tRNA(Met) + AMP + diphosphate. Is required not only for elongation of protein synthesis but also for the initiation of all mRNA translation through initiator tRNA(fMet) aminoacylation. The polypeptide is Methionine--tRNA ligase (metG) (Streptococcus pyogenes serotype M3 (strain SSI-1)).